The following is a 172-amino-acid chain: Mitochondrial import inner membrane translocase subunit Tim17-B (172 aa).

Residues Cys-9 and Cys-78 are joined by a disulfide bond. The next 3 helical transmembrane spans lie at 17–37, 61–77, and 113–133; these read CGGA…IKGF, QIGG…STID, and VGSA…GILL. Residues 146–172 form a disordered region; it reads PFLEDPSQLPPKDGTPAPGYPSYQQYH.

It belongs to the Tim17/Tim22/Tim23 family. In terms of assembly, component of the TIM23 complex at least composed of TIMM23, TIMM17 (TIMM17A or TIMM17B) and TIMM50. The complex interacts with the TIMM44 component of the PAM complex and with DNAJC15. In terms of processing, forms one disulfide bond. Expression is abundant in heart and skeletal muscle, intermediate in brain, and weak in pancreas, placenta, kidney and liver.

The protein localises to the mitochondrion inner membrane. Essential component of the TIM23 complex, a complex that mediates the translocation of transit peptide-containing proteins across the mitochondrial inner membrane. The chain is Mitochondrial import inner membrane translocase subunit Tim17-B (TIMM17B) from Homo sapiens (Human).